An 851-amino-acid polypeptide reads, in one-letter code: DNA mismatch repair protein MutS (851 aa).

602-609 (GPNMSGKS) serves as a coordination point for ATP.

It belongs to the DNA mismatch repair MutS family.

Its function is as follows. This protein is involved in the repair of mismatches in DNA. It is possible that it carries out the mismatch recognition step. This protein has a weak ATPase activity. This chain is DNA mismatch repair protein MutS, found in Streptococcus pyogenes serotype M3 (strain SSI-1).